Here is a 249-residue protein sequence, read N- to C-terminus: MRVLVCKDYDGMSKKAAEMIAAQIVLKPNSILGLATGSTPVGMYRDLVKKYNDNIVDFSDVMSFNLDEYYKLPISNDQSYDYFMKENLFNHVNIKPENTHLPNGMADDIEKECMNYEASIDAAGGIDVQVLGIGRNAHIGFNEPDTKFAKRTHVVELTESTIEANARFFKSREDVPKKAVSMGIGSILKSKKILLLASGEEKADAVYNTVYGDITPEVPGSILQLHKDTIVIVDEAAASKLNPKDYKLV.

Residue Asp-67 is the Proton acceptor; for enolization step of the active site. Asn-136 (for ring-opening step) is an active-site residue. His-138 functions as the Proton acceptor; for ring-opening step in the catalytic mechanism. The active-site For ring-opening step is Glu-143.

This sequence belongs to the glucosamine/galactosamine-6-phosphate isomerase family. NagB subfamily.

It carries out the reaction alpha-D-glucosamine 6-phosphate + H2O = beta-D-fructose 6-phosphate + NH4(+). Its pathway is amino-sugar metabolism; N-acetylneuraminate degradation; D-fructose 6-phosphate from N-acetylneuraminate: step 5/5. Catalyzes the reversible isomerization-deamination of glucosamine 6-phosphate (GlcN6P) to form fructose 6-phosphate (Fru6P) and ammonium ion. The polypeptide is Glucosamine-6-phosphate deaminase (Clostridioides difficile (strain 630) (Peptoclostridium difficile)).